We begin with the raw amino-acid sequence, 71 residues long: MPIVKVRENEPFDVALRRFKRSCEKAGVLSEVRRREFFEKPTWERKRKKAAAKKRLLKKLSRENARRIRLY.

Belongs to the bacterial ribosomal protein bS21 family.

The protein is Small ribosomal subunit protein bS21 of Pseudoalteromonas atlantica (strain T6c / ATCC BAA-1087).